A 352-amino-acid polypeptide reads, in one-letter code: Biotin synthase (352 aa).

One can recognise a Radical SAM core domain in the interval 41 to 268 (NEVQVSTLLS…ASHVRLSAGR (228 aa)). Positions 56, 60, and 63 each coordinate [4Fe-4S] cluster. [2Fe-2S] cluster is bound by residues Cys-100, Cys-131, Cys-191, and Arg-263.

It belongs to the radical SAM superfamily. Biotin synthase family. As to quaternary structure, homodimer. Requires [4Fe-4S] cluster as cofactor. [2Fe-2S] cluster serves as cofactor.

It catalyses the reaction (4R,5S)-dethiobiotin + (sulfur carrier)-SH + 2 reduced [2Fe-2S]-[ferredoxin] + 2 S-adenosyl-L-methionine = (sulfur carrier)-H + biotin + 2 5'-deoxyadenosine + 2 L-methionine + 2 oxidized [2Fe-2S]-[ferredoxin]. It participates in cofactor biosynthesis; biotin biosynthesis; biotin from 7,8-diaminononanoate: step 2/2. Catalyzes the conversion of dethiobiotin (DTB) to biotin by the insertion of a sulfur atom into dethiobiotin via a radical-based mechanism. The polypeptide is Biotin synthase (Marinobacter nauticus (strain ATCC 700491 / DSM 11845 / VT8) (Marinobacter aquaeolei)).